Reading from the N-terminus, the 342-residue chain is Paired box protein Pax-9 (342 aa).

The segment at residues 4-130 (AFGEVNQLGG…SSISRILRNK (127 aa)) is a DNA-binding region (paired). The PAI subdomain stretch occupies residues 7–63 (EVNQLGGVFVNGRPLPNAIRLRIVELAQLGIRPCDISRQLRVSHGCVSKILARYNET). The interval 82-130 (TVVKHIRTYKQRDPGIFAWEIRDRLLADGVCDKYNVPSVSSISRILRNK) is RED subdomain. Residues 168–189 (AAAAKVPTPPGVPAIPGSVALP) are interaction with KDM5B.

Interacts with KDM5B. In terms of tissue distribution, in the embryo, expressed in pharyngeal pouches and derivatives, developing vertebral column, tail, head and limbs.

It localises to the nucleus. Transcription factor required for normal development of thymus, parathyroid glands, ultimobranchial bodies, teeth, skeletal elements of skull and larynx as well as distal limbs. The sequence is that of Paired box protein Pax-9 (Pax9) from Mus musculus (Mouse).